Here is a 125-residue protein sequence, read N- to C-terminus: Large ribosomal subunit protein bL19 (125 aa).

It belongs to the bacterial ribosomal protein bL19 family.

Functionally, this protein is located at the 30S-50S ribosomal subunit interface and may play a role in the structure and function of the aminoacyl-tRNA binding site. This is Large ribosomal subunit protein bL19 from Ehrlichia canis (strain Jake).